The chain runs to 516 residues: Golgi-associated kinase 1B (516 aa).

Topologically, residues 1 to 37 (MTCPDKLGQLINWFVCSLCAPRVCKLWSSRRPRTRRN) are cytoplasmic. A helical; Signal-anchor for type II membrane protein transmembrane segment spans residues 38 to 55 (LLLGTACAIYLGFLVSQV). Residues 56–516 (GKGSFQHGQA…HGARVLPMNE (461 aa)) are Extracellular-facing. Asn286 is a glycosylation site (N-linked (GlcNAc...) asparagine).

This sequence belongs to the GASK family.

It localises to the golgi apparatus membrane. The sequence is that of Golgi-associated kinase 1B from Rattus norvegicus (Rat).